The chain runs to 250 residues: MHYSTEAIVLKNIPYGEADLIVTYLTKNYGLLNLFAKSPRKIKSRFGSSLEPLTYSQISFIGKEDNLQKIIQSDIIHPFQTIRENYRLFLQIANALRFLIQALPKKEPNSELFYLLLNTLLYLEKRIKPDNYILFLKVRGLSILGYLPDFKNCGVCRQELKEEFYYSSGFIICKKCSSSYHYSSSALPIPISQGVIKLLKEISTWTLNFLERVKISDKLFNEMEKFLQNHIFTVLGYNKTWDTEKNITAS.

This sequence belongs to the RecO family.

Functionally, involved in DNA repair and RecF pathway recombination. This Thermodesulfovibrio yellowstonii (strain ATCC 51303 / DSM 11347 / YP87) protein is DNA repair protein RecO.